The sequence spans 304 residues: Oxygen-dependent coproporphyrinogen-III oxidase (304 aa).

Ser-94 provides a ligand contact to substrate. The a divalent metal cation site is built by His-98 and His-108. Catalysis depends on His-108, which acts as the Proton donor. Residue 110–112 (NVR) participates in substrate binding. Residues His-147 and His-177 each coordinate a divalent metal cation. The tract at residues 242–277 (YVEFNLVWDRGTLFGLQSGGRTESVLMSMPPLARWQ) is important for dimerization. 260 to 262 (GGR) is a substrate binding site.

The protein belongs to the aerobic coproporphyrinogen-III oxidase family. As to quaternary structure, homodimer. A divalent metal cation serves as cofactor.

Its subcellular location is the cytoplasm. It carries out the reaction coproporphyrinogen III + O2 + 2 H(+) = protoporphyrinogen IX + 2 CO2 + 2 H2O. It functions in the pathway porphyrin-containing compound metabolism; protoporphyrin-IX biosynthesis; protoporphyrinogen-IX from coproporphyrinogen-III (O2 route): step 1/1. In terms of biological role, involved in the heme biosynthesis. Catalyzes the aerobic oxidative decarboxylation of propionate groups of rings A and B of coproporphyrinogen-III to yield the vinyl groups in protoporphyrinogen-IX. This chain is Oxygen-dependent coproporphyrinogen-III oxidase, found in Sodalis glossinidius (strain morsitans).